The chain runs to 281 residues: Pantothenate synthetase (281 aa).

26–33 is an ATP binding site; the sequence is MGNLHDGH. The active-site Proton donor is the H33. Q57 is a binding site for (R)-pantoate. Q57 contacts beta-alanine. 145–148 lines the ATP pocket; it reads GEKD. Residue Q151 participates in (R)-pantoate binding. Residue 182-185 coordinates ATP; sequence MSSR.

The protein belongs to the pantothenate synthetase family. In terms of assembly, homodimer.

Its subcellular location is the cytoplasm. It catalyses the reaction (R)-pantoate + beta-alanine + ATP = (R)-pantothenate + AMP + diphosphate + H(+). Its pathway is cofactor biosynthesis; (R)-pantothenate biosynthesis; (R)-pantothenate from (R)-pantoate and beta-alanine: step 1/1. In terms of biological role, catalyzes the condensation of pantoate with beta-alanine in an ATP-dependent reaction via a pantoyl-adenylate intermediate. This Idiomarina loihiensis (strain ATCC BAA-735 / DSM 15497 / L2-TR) protein is Pantothenate synthetase.